Here is a 307-residue protein sequence, read N- to C-terminus: Aspartate carbamoyltransferase catalytic subunit (307 aa).

Residues R54 and T55 each coordinate carbamoyl phosphate. Residue K83 participates in L-aspartate binding. The carbamoyl phosphate site is built by R104, H132, and Q135. The L-aspartate site is built by R165 and R228. Residues L267 and P268 each contribute to the carbamoyl phosphate site.

The protein belongs to the aspartate/ornithine carbamoyltransferase superfamily. ATCase family. In terms of assembly, heterododecamer (2C3:3R2) of six catalytic PyrB chains organized as two trimers (C3), and six regulatory PyrI chains organized as three dimers (R2).

It catalyses the reaction carbamoyl phosphate + L-aspartate = N-carbamoyl-L-aspartate + phosphate + H(+). The protein operates within pyrimidine metabolism; UMP biosynthesis via de novo pathway; (S)-dihydroorotate from bicarbonate: step 2/3. Catalyzes the condensation of carbamoyl phosphate and aspartate to form carbamoyl aspartate and inorganic phosphate, the committed step in the de novo pyrimidine nucleotide biosynthesis pathway. This is Aspartate carbamoyltransferase catalytic subunit from Clostridium perfringens (strain 13 / Type A).